We begin with the raw amino-acid sequence, 56 residues long: Small ribosomal subunit protein uS14 (56 aa).

Zn(2+) is bound by residues Cys-21, Cys-24, Cys-39, and Cys-42.

The protein belongs to the universal ribosomal protein uS14 family. It depends on Zn(2+) as a cofactor.

This is Small ribosomal subunit protein uS14 (RPS29) from Griffithsia japonica (Red alga).